The primary structure comprises 670 residues: MADSPVDSSPAPETSNGTPPSNGTSPSNESSPPTPPSSPPPSSISAPPPDISASFSPPPAPPTQETSPPTSPSSSPPVVANPSPQTPENPSPPAPEGSTPVTPPAPPQTPSNQSPERPTPPSPGANDDRNRTNGGNNNRDGSTPSPPSSGNRTSGDGGSPSPPRSISPPQNSGDSDSSSGNHPQANIGLIIGVLVGAGLLLLLAVCICICCNRKKKKKSPQVNHMHYYNNNPYGGAPSGNGGYYKGTPQDHVVNMAGQGGGNWGPQQPVSGPHSDASNLTGRTAIPSPQAATLGHNQSTFTYDELSIATEGFAQSNLLGQGGFGYVHKGVLPSGKEVAVKSLKLGSGQGEREFQAEVDIISRVHHRHLVSLVGYCISGGQRLLVYEFIPNNTLEFHLHGKGRPVLDWPTRVKIALGSARGLAYLHEDCHPRIIHRDIKAANILLDFSFETKVADFGLAKLSQDNYTHVSTRVMGTFGYLAPEYASSGKLSDKSDVFSFGVMLLELITGRPPLDLTGEMEDSLVDWARPLCLKAAQDGDYNQLADPRLELNYSHQEMVQMASCAAAAIRHSARRRPKMSQIVRALEGDMSMDDLSEGTRPGQSTYLSPGSVSSEYDASSYTADMKKFKKLALENKEYQSSEYGGTSEYGLNPSASSSEEMNRGSMKRNPQL.

The interval 1–181 is disordered; the sequence is MADSPVDSSP…SGDSDSSSGN (181 aa). At 1–186 the chain is on the extracellular side; that stretch reads MADSPVDSSP…SSSGNHPQAN (186 aa). Over residues 14-31 the composition is skewed to low complexity; sequence TSNGTPPSNGTSPSNESS. Residues N22 and N28 are each glycosylated (N-linked (GlcNAc...) asparagine). 2 stretches are compositionally biased toward pro residues: residues 32–62 and 84–109; these read PPTP…PAPP and PQTP…PPQT. N-linked (GlcNAc...) asparagine glycosylation is present at N130. Low complexity predominate over residues 132-141; it reads TNGGNNNRDG. An N-linked (GlcNAc...) asparagine glycan is attached at N151. Over residues 167 to 181 the composition is skewed to low complexity; that stretch reads SPPQNSGDSDSSSGN. A helical membrane pass occupies residues 187 to 207; the sequence is IGLIIGVLVGAGLLLLLAVCI. Residues 208–670 are Cytoplasmic-facing; that stretch reads CICCNRKKKK…RGSMKRNPQL (463 aa). Residue T301 is modified to Phosphothreonine. In terms of domain architecture, Protein kinase spans 312–590; that stretch reads FAQSNLLGQG…VRALEGDMSM (279 aa). ATP is bound by residues 318 to 326 and K340; that span reads LGQGGFGYV. Position 385 is a phosphotyrosine (Y385). D436 functions as the Proton acceptor in the catalytic mechanism. S469 carries the phosphoserine modification. Phosphothreonine occurs at positions 470 and 475. A Phosphotyrosine modification is found at Y483. 2 disordered regions span residues 589–613 and 635–670; these read SMDD…VSSE and EYQS…NPQL. The span at 599–613 shows a compositional bias: polar residues; sequence PGQSTYLSPGSVSSE.

This sequence belongs to the protein kinase superfamily. Ser/Thr protein kinase family. As to expression, mostly expressed in flower buds.

Its subcellular location is the cell membrane. The enzyme catalyses L-seryl-[protein] + ATP = O-phospho-L-seryl-[protein] + ADP + H(+). The catalysed reaction is L-threonyl-[protein] + ATP = O-phospho-L-threonyl-[protein] + ADP + H(+). This chain is Proline-rich receptor-like protein kinase PERK5 (PERK5), found in Arabidopsis thaliana (Mouse-ear cress).